A 329-amino-acid chain; its full sequence is Segregation and condensation protein B (329 aa).

Disordered regions lie at residues methionine 1–aspartate 39, isoleucine 252–alanine 274, and serine 286–glutamate 329.

Belongs to the ScpB family. As to quaternary structure, homodimer. Homodimerization may be required to stabilize the binding of ScpA to the Smc head domains. Component of the Structural Maintenance of Chromosome (SMC) condensin-like complex composed of ScpA, ScpB and the Smc homodimer. ScpA and ScpB bind to the head domain of Smc, the presence of the three proteins is required for the association of the complex with DNA.

The protein localises to the cytoplasm. A conditionally essential component of the chromosome segregation machinery. Required for chromosome condensation and partitioning. Important for positioning and anchoring of ParB-parS complexes (ori of replication) in the subpolar region, and of the ter replication site, as well as for segration of the ParB-parS complex and thus chromosome segregation. Probably acts via the formation of a condensin-like complex containing Smc, ScpA and ScpB that pulls DNA away from mid-cell into both cell halves. In Myxococcus xanthus (strain DK1622), this protein is Segregation and condensation protein B.